Reading from the N-terminus, the 76-residue chain is ATP synthase subunit 9, mitochondrial (76 aa).

2 helical membrane-spanning segments follow: residues 14-34 and 52-72; these read MATLGLGGAAIGIALVFVALI and ILGFALAEACGLFCLMMSFLL.

This sequence belongs to the ATPase C chain family. In terms of assembly, F-type ATPases have 2 components, CF(1) - the catalytic core - and CF(0) - the membrane proton channel. CF(1) has five subunits: alpha(3), beta(3), gamma(1), delta(1), epsilon(1). CF(0) has three main subunits: a, b and c.

It is found in the mitochondrion membrane. Its function is as follows. Mitochondrial membrane ATP synthase (F(1)F(0) ATP synthase or Complex V) produces ATP from ADP in the presence of a proton gradient across the membrane which is generated by electron transport complexes of the respiratory chain. F-type ATPases consist of two structural domains, F(1) - containing the extramembraneous catalytic core and F(0) - containing the membrane proton channel, linked together by a central stalk and a peripheral stalk. During catalysis, ATP synthesis in the catalytic domain of F(1) is coupled via a rotary mechanism of the central stalk subunits to proton translocation. Part of the complex F(0) domain. A homomeric c-ring of probably 10 subunits is part of the complex rotary element. The chain is ATP synthase subunit 9, mitochondrial (ATP9) from Debaryomyces hansenii (strain ATCC 36239 / CBS 767 / BCRC 21394 / JCM 1990 / NBRC 0083 / IGC 2968) (Yeast).